An 89-amino-acid polypeptide reads, in one-letter code: Small ribosomal subunit protein uS15 (89 aa).

The span at 1–21 (MVLDPTQKKSVIDAHAKHEGD) shows a compositional bias: basic and acidic residues. The disordered stretch occupies residues 1–24 (MVLDPTQKKSVIDAHAKHEGDTGS).

It belongs to the universal ribosomal protein uS15 family. Part of the 30S ribosomal subunit. Forms a bridge to the 50S subunit in the 70S ribosome, contacting the 23S rRNA.

In terms of biological role, one of the primary rRNA binding proteins, it binds directly to 16S rRNA where it helps nucleate assembly of the platform of the 30S subunit by binding and bridging several RNA helices of the 16S rRNA. Forms an intersubunit bridge (bridge B4) with the 23S rRNA of the 50S subunit in the ribosome. In Desulfovibrio desulfuricans (strain ATCC 27774 / DSM 6949 / MB), this protein is Small ribosomal subunit protein uS15.